A 312-amino-acid polypeptide reads, in one-letter code: Ribosomal RNA small subunit methyltransferase H (312 aa).

S-adenosyl-L-methionine-binding positions include 32 to 34, aspartate 51, phenylalanine 78, aspartate 99, and glutamine 106; that span reads AGH.

The protein belongs to the methyltransferase superfamily. RsmH family.

The protein localises to the cytoplasm. The catalysed reaction is cytidine(1402) in 16S rRNA + S-adenosyl-L-methionine = N(4)-methylcytidine(1402) in 16S rRNA + S-adenosyl-L-homocysteine + H(+). Its function is as follows. Specifically methylates the N4 position of cytidine in position 1402 (C1402) of 16S rRNA. The sequence is that of Ribosomal RNA small subunit methyltransferase H from Exiguobacterium sibiricum (strain DSM 17290 / CCUG 55495 / CIP 109462 / JCM 13490 / 255-15).